Consider the following 81-residue polypeptide: Acyl carrier protein (81 aa).

The Carrier domain maps to 2 to 80 (ASNEEILAGL…DAVSYIASAQ (79 aa)). O-(pantetheine 4'-phosphoryl)serine is present on serine 40.

This sequence belongs to the acyl carrier protein (ACP) family. In terms of processing, 4'-phosphopantetheine is transferred from CoA to a specific serine of apo-ACP by AcpS. This modification is essential for activity because fatty acids are bound in thioester linkage to the sulfhydryl of the prosthetic group.

The protein localises to the cytoplasm. It participates in lipid metabolism; fatty acid biosynthesis. Carrier of the growing fatty acid chain in fatty acid biosynthesis. In Renibacterium salmoninarum (strain ATCC 33209 / DSM 20767 / JCM 11484 / NBRC 15589 / NCIMB 2235), this protein is Acyl carrier protein.